The chain runs to 354 residues: S-adenosylmethionine:tRNA ribosyltransferase-isomerase (354 aa).

Belongs to the QueA family. As to quaternary structure, monomer.

Its subcellular location is the cytoplasm. The catalysed reaction is 7-aminomethyl-7-carbaguanosine(34) in tRNA + S-adenosyl-L-methionine = epoxyqueuosine(34) in tRNA + adenine + L-methionine + 2 H(+). The protein operates within tRNA modification; tRNA-queuosine biosynthesis. In terms of biological role, transfers and isomerizes the ribose moiety from AdoMet to the 7-aminomethyl group of 7-deazaguanine (preQ1-tRNA) to give epoxyqueuosine (oQ-tRNA). This Salmonella paratyphi A (strain ATCC 9150 / SARB42) protein is S-adenosylmethionine:tRNA ribosyltransferase-isomerase.